A 310-amino-acid polypeptide reads, in one-letter code: Mitochondrial thiamine pyrophosphate carrier 1 (310 aa).

Transmembrane regions (helical) follow at residues 16–32, 88–104, 117–141, 173–197, 218–234, and 274–291; these read VSPY…GGVA, ILYV…YSAL, IVMP…LTTY, GISG…LMFW, ICGF…TFPL, and GYGV…ISLW. Solcar repeat units lie at residues 16–107, 120–205, and 211–299; these read VSPY…LSKS, PSSV…AREF, and HVPF…VISA.

The protein belongs to the mitochondrial carrier (TC 2.A.29) family.

It localises to the mitochondrion inner membrane. In terms of biological role, mitochondrial transporter that mediates uptake of thiamine pyrophosphate (ThPP) into mitochondria. This chain is Mitochondrial thiamine pyrophosphate carrier 1 (TPC1), found in Lodderomyces elongisporus (strain ATCC 11503 / CBS 2605 / JCM 1781 / NBRC 1676 / NRRL YB-4239) (Yeast).